A 455-amino-acid polypeptide reads, in one-letter code: Yop proteins translocation protein P (455 aa).

2 disordered regions span residues 38-82 (NKGN…QPGR) and 430-455 (DFQA…EAEE). Basic and acidic residues-rich tracts occupy residues 43–69 (HPKE…DGLR) and 439–449 (QESRQKRHVYE).

This sequence belongs to the SpaN family.

Its subcellular location is the cytoplasm. Its function is as follows. Component of the yop secretion machinery. The polypeptide is Yop proteins translocation protein P (yscP) (Yersinia pseudotuberculosis serotype I (strain IP32953)).